Consider the following 268-residue polypeptide: Proteasome subunit beta type-4 (268 aa).

It belongs to the peptidase T1B family. In terms of assembly, the 26S proteasome consists of a 20S proteasome core and two 19S regulatory subunits. The 20S proteasome core is composed of 28 subunits that are arranged in four stacked rings, resulting in a barrel-shaped structure. The two end rings are each formed by seven alpha subunits, and the two central rings are each formed by seven beta subunits. The catalytic chamber with the active sites is on the inside of the barrel.

It is found in the cytoplasm. The protein resides in the nucleus. Non-catalytic component of the proteasome, a multicatalytic proteinase complex which is characterized by its ability to cleave peptides with Arg, Phe, Tyr, Leu, and Glu adjacent to the leaving group at neutral or slightly basic pH. The proteasome has an ATP-dependent proteolytic activity. The sequence is that of Proteasome subunit beta type-4 (Prosbeta7) from Drosophila melanogaster (Fruit fly).